The primary structure comprises 309 residues: Probable lipid kinase YegS-like (309 aa).

The DAGKc domain occupies 1-134 (MAPSHWRLIL…VDLLRIDADH (134 aa)). Residues Thr39, 65–71 (GDGTLSE), and Thr96 contribute to the ATP site. Mg(2+)-binding residues include Leu219, Asp222, and Leu224. The Proton acceptor role is filled by Glu280.

Belongs to the diacylglycerol/lipid kinase family. YegS lipid kinase subfamily. Requires Mg(2+) as cofactor. Ca(2+) is required as a cofactor.

It localises to the cytoplasm. Its function is as follows. Probably phosphorylates lipids; the in vivo substrate is unknown. In Xanthomonas axonopodis pv. citri (strain 306), this protein is Probable lipid kinase YegS-like.